Consider the following 40-residue polypeptide: uncharacterized protein (40 aa).

Residues 1 to 27 (MFPADVILQCFGFSVGIALVGYVISLF) form the signal peptide.

This is an uncharacterized protein from Archaeoglobus fulgidus (strain ATCC 49558 / DSM 4304 / JCM 9628 / NBRC 100126 / VC-16).